A 371-amino-acid polypeptide reads, in one-letter code: Anhydro-N-acetylmuramic acid kinase (371 aa).

12–20 contributes to the ATP binding site; the sequence is GTVLDGNID.

It belongs to the anhydro-N-acetylmuramic acid kinase family.

It carries out the reaction 1,6-anhydro-N-acetyl-beta-muramate + ATP + H2O = N-acetyl-D-muramate 6-phosphate + ADP + H(+). Its pathway is amino-sugar metabolism; 1,6-anhydro-N-acetylmuramate degradation. It functions in the pathway cell wall biogenesis; peptidoglycan recycling. Catalyzes the specific phosphorylation of 1,6-anhydro-N-acetylmuramic acid (anhMurNAc) with the simultaneous cleavage of the 1,6-anhydro ring, generating MurNAc-6-P. Is required for the utilization of anhMurNAc either imported from the medium or derived from its own cell wall murein, and thus plays a role in cell wall recycling. The polypeptide is Anhydro-N-acetylmuramic acid kinase (Rhizobium rhizogenes (strain K84 / ATCC BAA-868) (Agrobacterium radiobacter)).